Here is a 79-residue protein sequence, read N- to C-terminus: MSTTIWILLIIVALFGGLVGGIFIARKQIEKEIGEHPRLTPDAIREMMSQMGQKPSEAKVQQTYRNIVKHAKTAIKTKK.

The chain crosses the membrane as a helical span at residues 5-25 (IWILLIIVALFGGLVGGIFIA).

The protein belongs to the UPF0154 family.

It localises to the cell membrane. This is UPF0154 protein SAK_1616 from Streptococcus agalactiae serotype Ia (strain ATCC 27591 / A909 / CDC SS700).